A 218-amino-acid polypeptide reads, in one-letter code: Protein-L-isoaspartate O-methyltransferase (218 aa).

Ser60 is an active-site residue.

It belongs to the methyltransferase superfamily. L-isoaspartyl/D-aspartyl protein methyltransferase family.

The protein localises to the cytoplasm. The enzyme catalyses [protein]-L-isoaspartate + S-adenosyl-L-methionine = [protein]-L-isoaspartate alpha-methyl ester + S-adenosyl-L-homocysteine. Functionally, catalyzes the methyl esterification of L-isoaspartyl residues in peptides and proteins that result from spontaneous decomposition of normal L-aspartyl and L-asparaginyl residues. It plays a role in the repair and/or degradation of damaged proteins. This Roseiflexus castenholzii (strain DSM 13941 / HLO8) protein is Protein-L-isoaspartate O-methyltransferase.